A 197-amino-acid chain; its full sequence is Nucleoid occlusion factor SlmA (197 aa).

The 61-residue stretch at 7 to 67 (INRREHILQC…GLIEFIEDAI (61 aa)) folds into the HTH tetR-type domain. A DNA-binding region (H-T-H motif) is located at residues 30 to 49 (TTAKLAAEVGVSEAALYRHF). Residues 110-130 (ALLGENERLRSRIDVLFAKIE) adopt a coiled-coil conformation.

It belongs to the nucleoid occlusion factor SlmA family. As to quaternary structure, homodimer. Interacts with FtsZ.

It localises to the cytoplasm. The protein resides in the nucleoid. In terms of biological role, required for nucleoid occlusion (NO) phenomenon, which prevents Z-ring formation and cell division over the nucleoid. Acts as a DNA-associated cell division inhibitor that binds simultaneously chromosomal DNA and FtsZ, and disrupts the assembly of FtsZ polymers. SlmA-DNA-binding sequences (SBS) are dispersed on non-Ter regions of the chromosome, preventing FtsZ polymerization at these regions. The polypeptide is Nucleoid occlusion factor SlmA (Shewanella frigidimarina (strain NCIMB 400)).